We begin with the raw amino-acid sequence, 41 residues long: Photosystem I reaction center subunit IX (41 aa).

The helical transmembrane segment at 7–27 (YLSTAPVVAAAWFTFTAGLLI) threads the bilayer.

Belongs to the PsaJ family.

The protein localises to the plastid. The protein resides in the chloroplast thylakoid membrane. Functionally, may help in the organization of the PsaE and PsaF subunits. This is Photosystem I reaction center subunit IX from Oltmannsiellopsis viridis (Marine flagellate).